The following is a 289-amino-acid chain: 2-dehydro-3-deoxyphosphooctonate aldolase (289 aa).

Belongs to the KdsA family.

It localises to the cytoplasm. It catalyses the reaction D-arabinose 5-phosphate + phosphoenolpyruvate + H2O = 3-deoxy-alpha-D-manno-2-octulosonate-8-phosphate + phosphate. The protein operates within carbohydrate biosynthesis; 3-deoxy-D-manno-octulosonate biosynthesis; 3-deoxy-D-manno-octulosonate from D-ribulose 5-phosphate: step 2/3. It participates in bacterial outer membrane biogenesis; lipopolysaccharide biosynthesis. This Cupriavidus necator (strain ATCC 17699 / DSM 428 / KCTC 22496 / NCIMB 10442 / H16 / Stanier 337) (Ralstonia eutropha) protein is 2-dehydro-3-deoxyphosphooctonate aldolase.